We begin with the raw amino-acid sequence, 604 residues long: Aspartate--tRNA(Asp/Asn) ligase (604 aa).

Glutamate 175 serves as a coordination point for L-aspartate. An aspartate region spans residues 199 to 202 (QQFK). L-aspartate-binding residues include arginine 221 and histidine 456. 221-223 (RDE) is an ATP binding site. An ATP-binding site is contributed by glutamate 496. An L-aspartate-binding site is contributed by arginine 503. 548–551 (GVDR) contributes to the ATP binding site.

It belongs to the class-II aminoacyl-tRNA synthetase family. Type 1 subfamily. In terms of assembly, homodimer.

It is found in the cytoplasm. The catalysed reaction is tRNA(Asx) + L-aspartate + ATP = L-aspartyl-tRNA(Asx) + AMP + diphosphate. Its function is as follows. Aspartyl-tRNA synthetase with relaxed tRNA specificity since it is able to aspartylate not only its cognate tRNA(Asp) but also tRNA(Asn). Reaction proceeds in two steps: L-aspartate is first activated by ATP to form Asp-AMP and then transferred to the acceptor end of tRNA(Asp/Asn). The sequence is that of Aspartate--tRNA(Asp/Asn) ligase from Methylorubrum populi (strain ATCC BAA-705 / NCIMB 13946 / BJ001) (Methylobacterium populi).